Reading from the N-terminus, the 183-residue chain is TATA-box-binding protein (183 aa).

A run of 2 repeats spans residues 8–84 (VENI…VDKI) and 99–175 (IQNI…KERL).

Belongs to the TBP family.

In terms of biological role, general factor that plays a role in the activation of archaeal genes transcribed by RNA polymerase. Binds specifically to the TATA box promoter element which lies close to the position of transcription initiation. This is TATA-box-binding protein from Methanosphaera stadtmanae (strain ATCC 43021 / DSM 3091 / JCM 11832 / MCB-3).